The chain runs to 941 residues: Isoleucine--tRNA ligase (941 aa).

A 'HIGH' region motif is present at residues 59 to 69; it reads PYANGNIHIGH. Glu562 is an L-isoleucyl-5'-AMP binding site. Positions 603–607 match the 'KMSKS' region motif; the sequence is KMSKS. Lys606 serves as a coordination point for ATP. The Zn(2+) site is built by Cys904, Cys907, Cys924, and Cys927.

It belongs to the class-I aminoacyl-tRNA synthetase family. IleS type 1 subfamily. Monomer. Zn(2+) is required as a cofactor.

The protein resides in the cytoplasm. The catalysed reaction is tRNA(Ile) + L-isoleucine + ATP = L-isoleucyl-tRNA(Ile) + AMP + diphosphate. Catalyzes the attachment of isoleucine to tRNA(Ile). As IleRS can inadvertently accommodate and process structurally similar amino acids such as valine, to avoid such errors it has two additional distinct tRNA(Ile)-dependent editing activities. One activity is designated as 'pretransfer' editing and involves the hydrolysis of activated Val-AMP. The other activity is designated 'posttransfer' editing and involves deacylation of mischarged Val-tRNA(Ile). In Haemophilus influenzae (strain PittGG), this protein is Isoleucine--tRNA ligase.